A 643-amino-acid chain; its full sequence is Carboxy-terminal kinesin 2 (643 aa).

2 disordered regions span residues 1–42 (MDST…SSLE) and 81–101 (MRPK…KTKV). The segment at 1–116 (MDSTDKKVQV…QPAAIGAEKK (116 aa)) is globular. A compositionally biased stretch (polar residues) spans 88–101 (PGITSTSFSGKTKV). A coiled-coil region spans residues 117 to 296 (KRAAWDLKGQ…LVQELKGNIR (180 aa)). Residues 294 to 633 (NIRVFCRVRP…LRFASKVNEC (340 aa)) form the Kinesin motor domain. Residue 386–393 (GQTGSGKT) coordinates ATP.

This sequence belongs to the TRAFAC class myosin-kinesin ATPase superfamily. Kinesin family. NCD subfamily.

It is found in the cytoplasm. Its subcellular location is the cytoskeleton. In terms of biological role, promotes mitotic spindle assembly. The protein is Carboxy-terminal kinesin 2 of Xenopus laevis (African clawed frog).